The primary structure comprises 124 residues: Putative calmodulin-3 (124 aa).

4 EF-hand domains span residues glycine 1–asparagine 18, proline 19–aspartate 54, aspartate 56–lysine 91, and leucine 92–lysine 124. Residues cysteine 2, glutamate 7, aspartate 32, aspartate 34, asparagine 36, threonine 38, glutamate 43, aspartate 69, aspartate 71, asparagine 73, and glutamate 80 each contribute to the Ca(2+) site. Position 91 is an N6,N6,N6-trimethyllysine (lysine 91). Positions 105, 107, 109, 111, and 116 each coordinate Ca(2+).

Belongs to the calmodulin family. In terms of tissue distribution, not detected in the organs tested.

In terms of biological role, calmodulin mediates the control of a large number of enzymes, ion channels and other proteins by Ca(2+). Among the enzymes to be stimulated by the calmodulin-Ca(2+) complex are a number of protein kinases and phosphatases. This Solanum tuberosum (Potato) protein is Putative calmodulin-3 (PCM3).